The chain runs to 1376 residues: DNA-directed RNA polymerase subunit beta (1376 aa).

A compositionally biased stretch (polar residues) spans 1357 to 1368 (NSKTGRQTNPGT). The interval 1357-1376 (NSKTGRQTNPGTRENLPAAE) is disordered.

Belongs to the RNA polymerase beta chain family. As to quaternary structure, the RNAP catalytic core consists of 2 alpha, 1 beta, 1 beta' and 1 omega subunit. When a sigma factor is associated with the core the holoenzyme is formed, which can initiate transcription.

The enzyme catalyses RNA(n) + a ribonucleoside 5'-triphosphate = RNA(n+1) + diphosphate. In terms of biological role, DNA-dependent RNA polymerase catalyzes the transcription of DNA into RNA using the four ribonucleoside triphosphates as substrates. In Azorhizobium caulinodans (strain ATCC 43989 / DSM 5975 / JCM 20966 / LMG 6465 / NBRC 14845 / NCIMB 13405 / ORS 571), this protein is DNA-directed RNA polymerase subunit beta.